Reading from the N-terminus, the 188-residue chain is Elongation factor P (188 aa).

The protein belongs to the elongation factor P family.

It localises to the cytoplasm. The protein operates within protein biosynthesis; polypeptide chain elongation. In terms of biological role, involved in peptide bond synthesis. Stimulates efficient translation and peptide-bond synthesis on native or reconstituted 70S ribosomes in vitro. Probably functions indirectly by altering the affinity of the ribosome for aminoacyl-tRNA, thus increasing their reactivity as acceptors for peptidyl transferase. The chain is Elongation factor P from Chloroherpeton thalassium (strain ATCC 35110 / GB-78).